The chain runs to 174 residues: NADH-ubiquinone oxidoreductase chain 6 (174 aa).

Transmembrane regions (helical) follow at residues 25 to 45 (SMGLMLLIQTFLTCLITSIYV), 48 to 68 (FWFSYVLFLIFLGGMLILFIY), 82 to 102 (FSLTLISLIIFSIFTIVFFMI), and 143 to 163 (LITLLLINYLFLTLLVTVKIT).

Belongs to the complex I subunit 6 family.

It localises to the mitochondrion membrane. The catalysed reaction is a ubiquinone + NADH + 5 H(+)(in) = a ubiquinol + NAD(+) + 4 H(+)(out). In terms of biological role, core subunit of the mitochondrial membrane respiratory chain NADH dehydrogenase (Complex I) that is believed to belong to the minimal assembly required for catalysis. Complex I functions in the transfer of electrons from NADH to the respiratory chain. The immediate electron acceptor for the enzyme is believed to be ubiquinone. This chain is NADH-ubiquinone oxidoreductase chain 6 (ND6), found in Anopheles albimanus (New world malaria mosquito).